We begin with the raw amino-acid sequence, 196 residues long: uncharacterized protein (196 aa).

Positions 1–23 are cleaved as a signal peptide; that stretch reads MSARAPKELRLALPPCLLNRTFA. Asn-19 and Asn-26 each carry an N-linked (GlcNAc...) asparagine glycan. The Extracellular segment spans residues 24-60; the sequence is SHNASGGSNAGIRSSGAGGGTCITQVGQQLFQSFSST. The chain crosses the membrane as a helical span at residues 61–81; that stretch reads LVLIVLVTLIFCLIVLSLSTF. Residues 82–196 lie on the Cytoplasmic side of the membrane; the sequence is HIHKRRMKKR…EGLLQTVVLS (115 aa). Residues 93–184 form a disordered region; the sequence is MQRAQEEYER…AHAASSCLDT (92 aa). 2 stretches are compositionally biased toward basic and acidic residues: residues 95-106 and 124-135; these read RAQEEYERDHCS and HGKETRLERQPR. The segment covering 161-171 has biased composition (pro residues); the sequence is CAPPPPPPVPS. A compositionally biased stretch (low complexity) spans 172-181; the sequence is PHGAHAASSC.

The protein localises to the membrane. This is an uncharacterized protein from Rattus norvegicus (Rat).